Consider the following 1192-residue polypeptide: MEAFEISDFKEHAKKKSMWAGALNKVTISGLMGVFTEDEDLMALPIHRDHCPALLKIFDELIVNATDHERACHSKTKKVTYIKISFDKGVFSCENDGPGIPIAKHEQASLIAKRDVYVPEVASCFFLAGTNINKAKDCIKGGTNGVGLKLAMVHSQWAILTTADGAQKYVQQINQRLDIIEPPTITPSREMFTRIELMPVYQELGYAEPLSETEQADLSAWIYLRACQCAAYVGKGTTIYYNDKPCRTGSVMALAKMYTLLSAPNSTIHTATIKADAKPYSLHPLQVAAVVSPKFKKFEHVSIINGVNCVKGEHVTFLKKTINEMVIKKFQQTIKDKNRKTTLRDSCSNIFVVIVGSIPGIEWTGQRKDELSIAENVFKTHYSIPSSFLTSMTRSIVDILLQSISKKDNHKQVDVDKYTRARNAGGKRAQDCMLLAAEGDSALSLLRTGLTLGKSNPSGPSFDFCGMISLGGVIMNACKKVTNITTDSGETIMVRNEQLTNNKVLQGIVQVLGLDFNCHYKTQEERAKLRYGCIVACVDQDLDGCGKILGLLLAYFHLFWPQLIIHGFVKRLLTPLIRVYEKGKTMPVEFYYEQEFDAWAKKQTSLVNHTVKYYKGLAAHDTHEVKSMFKHFDNMVYTFTLDDSAKELFHIYFGGESELRKRELCTGVVPLTETQTQSIHSVRRIPCSLHLQVDTKAYKLDAIERQIPNFLDGMTRARRKILAGGVKCFASNNRERKVFQFGGYVADHMFYHHGDMSLNTSIIKAAQYYPGSSHLYPVFIGIGSFGSRHLGGKDAGSPRYISVQLASEFIKTMFPAEDSWLLPYVFEDGQRAEPEYYVPVLPLAIMEYGANPSEGWKYTTWARQLEDILALVRAYVDKDNPKHELLHYAIKHKITILPLRPSNYNFKGHLKRFGQYYYSYGTYDISEQRNIITITELPLRVPTVAYIESIKKSSNRMTFIEEIIDYSSSETIEILVKLKPNSLNRIVEEFKETEEQDSIENFLRLRNCLHSHLNFVKPKGGIIEFNSYYEILYAWLPYRRELYQKRLMREHAVLKLRIIMETAIVRYINESAELNLSHYEDEKEASRILSEHGFPPLNHTLIISPEFASIEELNQKALQGCYTYILSLQARELLIAAKTRRVEKIKKMQARLDKVEQLLQESPFPGASVWLEEIDAVEKAIIKGRNTQWKFH.

Residues asparagine 64, asparagine 95, and 142–149 (GTNGVGLK) each bind ATP. Mg(2+) contacts are provided by glutamate 438, aspartate 539, and aspartate 541. A Topo IIA-type catalytic domain is found at 707 to 1174 (IPNFLDGMTR…PGASVWLEEI (468 aa)). The active-site O-(5'-phospho-DNA)-tyrosine intermediate is tyrosine 800.

The protein belongs to the type II topoisomerase family. Mg(2+) serves as cofactor. It depends on Mn(2+) as a cofactor. Requires Ca(2+) as cofactor.

The protein localises to the host cytoplasm. It catalyses the reaction ATP-dependent breakage, passage and rejoining of double-stranded DNA.. Functionally, type II topoisomerase. Processively relaxes supercoiled DNA. Displays DNA-supercoiling activity only when associated with the viral histone-like protein. This chain is DNA topoisomerase 2 (TOP), found in African swine fever virus (strain Badajoz 1971 Vero-adapted) (Ba71V).